The chain runs to 447 residues: Dimethylsulfoniopropionate lyase DddP (447 aa).

Positions 1–26 (MNRHFNATRKIDPSRGATLGDGSPND) are disordered. 6 residues coordinate a divalent metal cation: Asp-295, Asp-297, Asp-307, His-371, Glu-406, and Glu-421.

Belongs to the peptidase M24B family. Homodimer. The cofactor is a divalent metal cation.

The catalysed reaction is S,S-dimethyl-beta-propiothetin = acrylate + dimethyl sulfide + H(+). Functionally, able to cleave dimethylsulfoniopropionate (DMSP), releasing dimethyl sulfide (DMS). DMS is the principal form by which sulfur is transported from oceans to the atmosphere. The real activity of the protein is however subject to debate and it is unclear whether it constitutes a real dimethylsulfoniopropionate lyase in vivo: the low activity with DMSP as substrate suggests that DMSP is not its native substrate. The chain is Dimethylsulfoniopropionate lyase DddP from Roseobacter denitrificans (strain ATCC 33942 / OCh 114) (Erythrobacter sp. (strain OCh 114)).